Here is an 84-residue protein sequence, read N- to C-terminus: MAHKKGQGASRNGRDSKSKRLGVKVGAGQKVSTGSILVRQRGTRWNPAQNVGRGRDDTLFALVDGIVVMKKTNRTYISVVPEQL.

A disordered region spans residues 1 to 27 (MAHKKGQGASRNGRDSKSKRLGVKVGA).

It belongs to the bacterial ribosomal protein bL27 family.

The polypeptide is Large ribosomal subunit protein bL27 (Chlamydia pneumoniae (Chlamydophila pneumoniae)).